A 270-amino-acid chain; its full sequence is Glutamate 5-kinase (270 aa).

Residue K18 participates in ATP binding. Substrate is bound by residues S54, D141, and N153. 173 to 174 (SD) lines the ATP pocket.

Belongs to the glutamate 5-kinase family.

It localises to the cytoplasm. The enzyme catalyses L-glutamate + ATP = L-glutamyl 5-phosphate + ADP. It functions in the pathway amino-acid biosynthesis; L-proline biosynthesis; L-glutamate 5-semialdehyde from L-glutamate: step 1/2. In terms of biological role, catalyzes the transfer of a phosphate group to glutamate to form L-glutamate 5-phosphate. This chain is Glutamate 5-kinase, found in Leifsonia xyli subsp. xyli (strain CTCB07).